A 190-amino-acid chain; its full sequence is Small ribosomal subunit protein mS23 (190 aa).

Position 2 is an N-acetylalanine (alanine 2). Lysine 83 carries the post-translational modification N6-succinyllysine. The residue at position 102 (lysine 102) is an N6-acetyllysine. The tract at residues 137–190 (KARTQQEGSQVSRKSESMGVESQTALEENPPLKEVPQAQHLESPGEESKGLSPP) is disordered.

The protein belongs to the mitochondrion-specific ribosomal protein mS23 family. Component of the mitochondrial ribosome small subunit (28S) which comprises a 12S rRNA and about 30 distinct proteins.

It is found in the mitochondrion. This chain is Small ribosomal subunit protein mS23, found in Bos taurus (Bovine).